Consider the following 289-residue polypeptide: Rhodopsin (289 aa).

The Extracellular portion of the chain corresponds to 1–7; that stretch reads YLVSPAG. Residues 8-32 traverse the membrane as a helical segment; it reads YAALGAYMFLLILVGFPVNFLTLYV. Topologically, residues 33-44 are cytoplasmic; sequence TLEHKKLRTPLN. The chain crosses the membrane as a helical span at residues 45–67; the sequence is YILLNLAVADLFMVLGGFTTTMY. The Extracellular portion of the chain corresponds to 68–81; the sequence is TSMHGYFVLGRLGC. A disulfide bridge links Cys-81 with Cys-158. Residues 82–104 traverse the membrane as a helical segment; sequence NLEGFFVTLGGEIALWSLVVLAI. Residues 105–107 carry the 'Ionic lock' involved in activated form stabilization motif; it reads ERW. The Cytoplasmic portion of the chain corresponds to 105–123; that stretch reads ERWIGVFKSIRNFRFTEDH. The chain crosses the membrane as a helical span at residues 124–144; that stretch reads AIMGLGFSWVMAATCAVPPLV. Residues 145 to 173 are Extracellular-facing; that stretch reads GWLRYIPEGMQCSCGVDYYTRAEGFNNES. A glycan (N-linked (GlcNAc...) asparagine) is linked at Asn-171. Residues 174-195 traverse the membrane as a helical segment; that stretch reads FVIYMFIVHFLIPLIVIFFCYG. Topologically, residues 196–223 are cytoplasmic; the sequence is RLLCAVKEAAAAQQESETTQRAEKEVSR. A helical membrane pass occupies residues 224–245; sequence MVVIMVIGYLVCWLPYASVAWW. Residues 246-257 lie on the Extracellular side of the membrane; sequence IFCNQGSEFGPI. The helical transmembrane segment at 258–279 threads the bilayer; the sequence is FMTLPAFFAKSPAIYNPLIYIC. Position 267 is an N6-(retinylidene)lysine (Lys-267). Over 280-289 the chain is Cytoplasmic; sequence MNKQFPHCMI.

This sequence belongs to the G-protein coupled receptor 1 family. Opsin subfamily. Post-translationally, phosphorylated on some or all of the serine and threonine residues present in the C-terminal region. In terms of processing, contains one covalently linked retinal chromophore.

It localises to the membrane. The protein resides in the cell projection. Its subcellular location is the cilium. It is found in the photoreceptor outer segment. Photoreceptor required for image-forming vision at low light intensity. While most salt water fish species use retinal as chromophore, most freshwater fish use 3-dehydroretinal, or a mixture of retinal and 3-dehydroretinal. Light-induced isomerization of 11-cis to all-trans retinal triggers a conformational change that activates signaling via G-proteins. Subsequent receptor phosphorylation mediates displacement of the bound G-protein alpha subunit by arrestin and terminates signaling. The sequence is that of Rhodopsin (rho) from Leocottus kesslerii (Kessler's sculpin).